A 102-amino-acid polypeptide reads, in one-letter code: Small ribosomal subunit protein uS10 (102 aa).

It belongs to the universal ribosomal protein uS10 family. Part of the 30S ribosomal subunit.

In terms of biological role, involved in the binding of tRNA to the ribosomes. The chain is Small ribosomal subunit protein uS10 from Methanococcus maripaludis (strain C6 / ATCC BAA-1332).